The sequence spans 883 residues: Phosphoenolpyruvate carboxylase (883 aa).

Active-site residues include His-138 and Lys-546.

It belongs to the PEPCase type 1 family. Mg(2+) is required as a cofactor.

It catalyses the reaction oxaloacetate + phosphate = phosphoenolpyruvate + hydrogencarbonate. In terms of biological role, forms oxaloacetate, a four-carbon dicarboxylic acid source for the tricarboxylic acid cycle. This Klebsiella pneumoniae (strain 342) protein is Phosphoenolpyruvate carboxylase.